The chain runs to 501 residues: Large ribosomal subunit protein uL2m (501 aa).

Disordered regions lie at residues 187–217 (GRER…APRR) and 459–501 (AMNP…KRRN). Polar residues predominate over residues 198 to 213 (NTFSQSEGQRWKTQSG). The span at 464–474 (DHPHGGGEGRT) shows a compositional bias: basic and acidic residues.

This sequence belongs to the universal ribosomal protein uL2 family.

The protein localises to the mitochondrion. The sequence is that of Large ribosomal subunit protein uL2m (RPL2) from Marchantia polymorpha (Common liverwort).